A 351-amino-acid chain; its full sequence is MSGIVTYGSYIPRYRIKPDEIARVWGENPDHIKNGIYILSKSVPAPDEDVATISVEAARNALKRKKIDPKEIGAIYVGSESHPYAVKPTATIVGSAIGVDFSLFAADYEFACKAGTAGMQNVKAMVDSGMIKYGLAIGADTSQGAPGDALEYSASAGGTAFIIGKDDTIAEINSTLSVASDTPDFWRREGQPYPSHGERFTGEPAYFRHVITAAKMMMERMETQPKDYDYVVFHQPNGKFPTRAAKMLGFEEKQYKDGLLTPYIGNTYSGSMMTGLSSILDVSKPGDHILAVSFGSGAGSDAFDITVTDRIEEMDRNRAPTIKKMLENVKWVDYAIYAKYKKKIIVGDGIE.

Glu-80 (proton donor/acceptor) is an active-site residue. Cys-112 acts as the Acyl-thioester intermediate in catalysis. Cys-112 and Ser-153 together coordinate (3S)-3-hydroxy-3-methylglutaryl-CoA. Arg-199 serves as a coordination point for CoA. Residues Thr-201 and His-234 each contribute to the (3S)-3-hydroxy-3-methylglutaryl-CoA site. The active-site Proton donor/acceptor is His-234. Position 239 (Lys-239) interacts with CoA. (3S)-3-hydroxy-3-methylglutaryl-CoA contacts are provided by Arg-243, Asn-266, and Ser-296.

The protein belongs to the thiolase-like superfamily. Archaeal HMG-CoA synthase family. In terms of assembly, interacts with acetoacetyl-CoA thiolase that catalyzes the precedent step in the pathway and with a DUF35 protein. The acetoacetyl-CoA thiolase/HMG-CoA synthase complex channels the intermediate via a fused CoA-binding site, which allows for efficient coupling of the endergonic thiolase reaction with the exergonic HMGCS reaction.

It catalyses the reaction acetoacetyl-CoA + acetyl-CoA + H2O = (3S)-3-hydroxy-3-methylglutaryl-CoA + CoA + H(+). The protein operates within metabolic intermediate biosynthesis; (R)-mevalonate biosynthesis; (R)-mevalonate from acetyl-CoA: step 2/3. In terms of biological role, catalyzes the condensation of acetyl-CoA with acetoacetyl-CoA to form 3-hydroxy-3-methylglutaryl-CoA (HMG-CoA). Functions in the mevalonate (MVA) pathway leading to isopentenyl diphosphate (IPP), a key precursor for the biosynthesis of isoprenoid compounds that are building blocks of archaeal membrane lipids. The polypeptide is Hydroxymethylglutaryl-CoA synthase (Thermoplasma acidophilum (strain ATCC 25905 / DSM 1728 / JCM 9062 / NBRC 15155 / AMRC-C165)).